The sequence spans 652 residues: Beta-mannosyltransferase 1 (652 aa).

Topologically, residues Met-1–Arg-15 are cytoplasmic. The chain crosses the membrane as a helical span at residues Leu-16 to Tyr-34. Residues Lys-35–Ser-652 are Extracellular-facing. Asn-57 carries N-linked (GlcNAc...) asparagine glycosylation. A coiled-coil region spans residues Pro-535–Ser-652. A disordered region spans residues Ala-536 to Lys-621.

It belongs to the BMT family.

It localises to the membrane. Beta-mannosyltransferase involved in cell wall biosynthesis. Involved in the beta-mannosylation of outer chains of N-glycans. The sequence is that of Beta-mannosyltransferase 1 (BMT1) from Komagataella phaffii (strain ATCC 76273 / CBS 7435 / CECT 11047 / NRRL Y-11430 / Wegner 21-1) (Yeast).